A 171-amino-acid polypeptide reads, in one-letter code: uncharacterized protein (171 aa).

This is an uncharacterized protein from Thermofilum pendens.